The sequence spans 565 residues: Genetic interactor of prohibitins 3, mitochondrial (565 aa).

One can recognise a CP-type G domain in the interval Thr-129–Asn-315.

Belongs to the TRAFAC class YlqF/YawG GTPase family. GEP3 subfamily.

It localises to the mitochondrion. May be involved in the mitochondrial lipid metabolism. This Zygosaccharomyces rouxii (strain ATCC 2623 / CBS 732 / NBRC 1130 / NCYC 568 / NRRL Y-229) protein is Genetic interactor of prohibitins 3, mitochondrial (GEP3).